The following is a 72-amino-acid chain: MTSSAAAIRLGFEPFVNASPVELRTNWSDSDVQAVISATYRQVFGNEHLMLSERLTSAESLLASGNISVREF.

The PBS-linker domain maps to 1-72 (MTSSAAAIRL…ASGNISVREF (72 aa)).

This sequence belongs to the phycobilisome linker protein family.

Its subcellular location is the cellular thylakoid membrane. Functionally, rod linker protein, associated with phycocyanin. Linker polypeptides determine the state of aggregation and the location of the disk-shaped phycobiliprotein units within the phycobilisome and modulate their spectroscopic properties in order to mediate a directed and optimal energy transfer. The protein is Phycobilisome 37.5 kDa linker polypeptide, phycocyanin-associated, rod (cpcH2) of Pseudanabaena tenuis (strain PCC 7409).